Reading from the N-terminus, the 267-residue chain is Strigolactone esterase RMS3 (267 aa).

The active-site Nucleophile is the Ser-96. Catalysis depends on residues Asp-218 and His-247.

The protein belongs to the AB hydrolase superfamily.

The protein localises to the cytoplasm. It is found in the nucleus. Its function is as follows. Involved in strigolactone signaling pathway. Functions downstream of strigolactone synthesis, as a component of hormone signaling and as an enzyme that participates in the conversion of strigolactones to the bioactive form. Binds and hydrolyzes the synthetic strigolactone analog GR24 and its enantiomers in vitro. Forms a stable covalent complex with the D-ring of strigolactone, which is essential for hormone bioactivity. The D-ring is attached to His-247 of the catalytic triad. The hydrolysis of strigolactone into a covalently linked intermediate molecule is required to trigger strigolactone signaling. This mechanism defines RMS3 as a non-canonical hormone receptor with dual functions to generate and sense the active form of strigolactone. Strigolactones are hormones that inhibit tillering and shoot branching through the MAX-dependent pathway, contribute to the regulation of shoot architectural response to phosphate-limiting conditions and function as rhizosphere signal that stimulates hyphal branching of arbuscular mycorrhizal fungi and trigger seed germination of root parasitic weeds. This Pisum sativum (Garden pea) protein is Strigolactone esterase RMS3.